Here is a 278-residue protein sequence, read N- to C-terminus: uncharacterized protein (278 aa).

10 consecutive transmembrane segments (helical) span residues M1–Y21, A30–L50, V56–I76, I92–Y112, L116–G136, L146–L166, L170–T190, G209–W229, N230–L250, and L258–Q278. EamA domains lie at I12–G136 and F154–L274.

This sequence belongs to the EamA transporter family.

Its subcellular location is the cell membrane. This is an uncharacterized protein from Archaeoglobus fulgidus (strain ATCC 49558 / DSM 4304 / JCM 9628 / NBRC 100126 / VC-16).